The chain runs to 329 residues: COMPASS component SWD2 (329 aa).

WD repeat units follow at residues 25–64 (KDCGPVTSLNFDDNGQFLLTSSSNDTMQLYSATNCKFLDT), 111–150 (GHGALVNDLKMNPVNDTFLSSSYDESVRLWDLKISKPQVI), 152–191 (PSLVPNCIAYDPSGLVFALGNPENFEIGLYNLKKIQEGPF), 199–238 (ATFSQWNKLEFSNNGKYLLVGSSIGKHLIFDAFTGQQLFE), 246–287 (PMRE…SNKV), and 298–328 (SHETCPRSIAFNPKYSMFVTADETVDFYVYD).

The protein belongs to the WD repeat SWD2 family. Component of the Set1C/COMPASS complex which consists of SET1(2), BRE2(2), SPP1(2), SDC1(1), SHG1(1), SWD1(1), SWD2(1), and SWD3(1). Component of the cleavage and polyadenylation factor (CPF) complex, which is composed of PTI1, SYC1, SSU72, GLC7, MPE1, REF2, PFS2, PTA1, YSH1/BRR5, SWD2, CFT2/YDH1, YTH1, CFT1/YHH1, FIP1 and PAP1. Component of the APT complex, which is a subcomplex of CPF, and is composed of PTI1, SYC1, SSU72, GLC7, REF2, PTA1 and SWD2.

Its subcellular location is the nucleus. It localises to the chromosome. The protein resides in the telomere. The COMPASS (Set1C) complex specifically mono-, di- and trimethylates histone H3 to form H3K4me1/2/3, which subsequently plays a role in telomere length maintenance and transcription elongation regulation. Functionally, involved in mediating RNA polymerase II termination. Component of the cleavage and polyadenylation factor (CPF) complex, which plays a key role in polyadenylation-dependent pre-mRNA 3'-end formation and cooperates with cleavage factors including the CFIA complex and NAB4/CFIB. Component of the APT complex, which may be involved in polyadenylation-independent transcript 3'-end formation. This chain is COMPASS component SWD2 (SWD2), found in Saccharomyces cerevisiae (strain ATCC 204508 / S288c) (Baker's yeast).